The sequence spans 317 residues: Protein lifeguard 2 (317 aa).

Residues 1-54 are disordered; that stretch reads MTQGKLSVANKAPGTEGQQHQANGEKKDAPAVPSAPPSYEEATSGEGLKAGTFP. 3 consecutive transmembrane segments (helical) span residues 107–127, 139–159, and 166–186; these read VYTILLVQLLVTLAVVALFTF, PGWYWASYAVFFATYLTLACC, and FPWNLILLTIFTLSMAYLTGM. N192 carries an N-linked (GlcNAc...) asparagine glycan. 4 consecutive transmembrane segments (helical) span residues 195 to 215, 226 to 246, 252 to 272, and 291 to 311; these read SVLLCLVITALVCLSVTIFSF, GVLFVLLMTLFFSGLLLAVLL, PWLHAVYAVLGAGVFTLFLAF, and IFGALNIYLDIIYIFTFFLQL.

The protein belongs to the BI1 family. LFG subfamily. In terms of assembly, interacts with FAS/TNFRSF6 and BAX. As to expression, brain. Highly expressed in cerebellum, also found in cortex, olfactory bulb, and hippocampus.

The protein localises to the cell membrane. It localises to the membrane raft. It is found in the postsynaptic cell membrane. Antiapoptotic protein which protects cells uniquely from Fas-induced apoptosis. Regulates Fas-mediated apoptosis in neurons by interfering with caspase-8 activation. Plays a role in cerebellar development by affecting cerebellar size, internal granular layer (IGL) thickness, and Purkinje cell (PC) development. This Mus musculus (Mouse) protein is Protein lifeguard 2 (Faim2).